The sequence spans 89 residues: Small ribosomal subunit protein uS15 (89 aa).

The protein belongs to the universal ribosomal protein uS15 family. In terms of assembly, part of the 30S ribosomal subunit. Forms a bridge to the 50S subunit in the 70S ribosome, contacting the 23S rRNA.

Its function is as follows. One of the primary rRNA binding proteins, it binds directly to 16S rRNA where it helps nucleate assembly of the platform of the 30S subunit by binding and bridging several RNA helices of the 16S rRNA. In terms of biological role, forms an intersubunit bridge (bridge B4) with the 23S rRNA of the 50S subunit in the ribosome. In Shewanella woodyi (strain ATCC 51908 / MS32), this protein is Small ribosomal subunit protein uS15.